Reading from the N-terminus, the 384-residue chain is Carbamoyl phosphate synthase small chain (384 aa).

Residues 1–192 are CPSase; sequence MPIAAAKPAL…FGPVAEQQGQ (192 aa). S51, G244, and G246 together coordinate L-glutamine. One can recognise a Glutamine amidotransferase type-1 domain in the interval 196–381; it reads TVVALDFGVK…VKLMRQQKAE (186 aa). C272 functions as the Nucleophile in the catalytic mechanism. M273, Q276, N312, G314, and F315 together coordinate L-glutamine. Residues H354 and E356 contribute to the active site.

It belongs to the CarA family. As to quaternary structure, composed of two chains; the small (or glutamine) chain promotes the hydrolysis of glutamine to ammonia, which is used by the large (or ammonia) chain to synthesize carbamoyl phosphate. Tetramer of heterodimers (alpha,beta)4.

The enzyme catalyses hydrogencarbonate + L-glutamine + 2 ATP + H2O = carbamoyl phosphate + L-glutamate + 2 ADP + phosphate + 2 H(+). It catalyses the reaction L-glutamine + H2O = L-glutamate + NH4(+). Its pathway is amino-acid biosynthesis; L-arginine biosynthesis; carbamoyl phosphate from bicarbonate: step 1/1. The protein operates within pyrimidine metabolism; UMP biosynthesis via de novo pathway; (S)-dihydroorotate from bicarbonate: step 1/3. In terms of biological role, small subunit of the glutamine-dependent carbamoyl phosphate synthetase (CPSase). CPSase catalyzes the formation of carbamoyl phosphate from the ammonia moiety of glutamine, carbonate, and phosphate donated by ATP, constituting the first step of 2 biosynthetic pathways, one leading to arginine and/or urea and the other to pyrimidine nucleotides. The small subunit (glutamine amidotransferase) binds and cleaves glutamine to supply the large subunit with the substrate ammonia. This is Carbamoyl phosphate synthase small chain from Synechocystis sp. (strain ATCC 27184 / PCC 6803 / Kazusa).